A 139-amino-acid chain; its full sequence is Nucleoside diphosphate kinase (139 aa).

Positions 12, 60, 88, 94, 105, and 115 each coordinate ATP. The Pros-phosphohistidine intermediate role is filled by H118.

The protein belongs to the NDK family. Homotetramer. It depends on Mg(2+) as a cofactor.

The protein resides in the cytoplasm. It carries out the reaction a 2'-deoxyribonucleoside 5'-diphosphate + ATP = a 2'-deoxyribonucleoside 5'-triphosphate + ADP. The catalysed reaction is a ribonucleoside 5'-diphosphate + ATP = a ribonucleoside 5'-triphosphate + ADP. Its function is as follows. Major role in the synthesis of nucleoside triphosphates other than ATP. The ATP gamma phosphate is transferred to the NDP beta phosphate via a ping-pong mechanism, using a phosphorylated active-site intermediate. The polypeptide is Nucleoside diphosphate kinase (Caldanaerobacter subterraneus subsp. tengcongensis (strain DSM 15242 / JCM 11007 / NBRC 100824 / MB4) (Thermoanaerobacter tengcongensis)).